The chain runs to 686 residues: Catalase-2 (686 aa).

Over residues 1-27 the composition is skewed to basic and acidic residues; sequence MSDDQNKRVNEHSKDEQLEQYRTDNSG. Positions 1 to 43 are disordered; the sequence is MSDDQNKRVNEHSKDEQLEQYRTDNSGKKMTTNQGLRVSEDEH. Catalysis depends on residues H78 and N151. Position 365 (Y365) interacts with heme.

It belongs to the catalase family. HPII subfamily. The cofactor is heme.

The catalysed reaction is 2 H2O2 = O2 + 2 H2O. In terms of biological role, decomposes hydrogen peroxide into water and oxygen; serves to protect cells from the toxic effects of hydrogen peroxide. Involved in sporulation. This is Catalase-2 (katE) from Bacillus subtilis (strain 168).